The following is a 362-amino-acid chain: Large ribosomal subunit protein uL4A (362 aa).

The residue at position 2 (Ser-2) is an N-acetylserine. Arg-95 carries the post-translational modification Omega-N-methylarginine. A C-terminal-extended nuclear localization signal region spans residues 277-362; the sequence is PSHIISTSDV…AVFTETLKHD (86 aa).

This sequence belongs to the universal ribosomal protein uL4 family. In terms of assembly, component of the large ribosomal subunit (LSU). Mature yeast ribosomes consist of a small (40S) and a large (60S) subunit. The 40S small subunit contains 1 molecule of ribosomal RNA (18S rRNA) and 33 different proteins (encoded by 57 genes). The large 60S subunit contains 3 rRNA molecules (25S, 5.8S and 5S rRNA) and 46 different proteins (encoded by 81 genes). uL4 is associated with the polypeptide exit tunnel. uL4 interacts with its chaperone ACL4 and the nuclear import receptor KAP104. Post-translationally, N-terminally acetylated by acetyltransferase NatA.

The protein resides in the cytoplasm. It localises to the nucleus. Functionally, component of the ribosome, a large ribonucleoprotein complex responsible for the synthesis of proteins in the cell. The small ribosomal subunit (SSU) binds messenger RNAs (mRNAs) and translates the encoded message by selecting cognate aminoacyl-transfer RNA (tRNA) molecules. The large subunit (LSU) contains the ribosomal catalytic site termed the peptidyl transferase center (PTC), which catalyzes the formation of peptide bonds, thereby polymerizing the amino acids delivered by tRNAs into a polypeptide chain. The nascent polypeptides leave the ribosome through a tunnel in the LSU and interact with protein factors that function in enzymatic processing, targeting, and the membrane insertion of nascent chains at the exit of the ribosomal tunnel. uL4 participates in the regulation of the accumulation of its own mRNA. This chain is Large ribosomal subunit protein uL4A, found in Saccharomyces cerevisiae (strain ATCC 204508 / S288c) (Baker's yeast).